Here is a 216-residue protein sequence, read N- to C-terminus: Pyrophosphatase PpaX (216 aa).

Catalysis depends on Asp-9, which acts as the Nucleophile.

Belongs to the HAD-like hydrolase superfamily. PpaX family. Mg(2+) is required as a cofactor.

The enzyme catalyses diphosphate + H2O = 2 phosphate + H(+). Its function is as follows. Hydrolyzes pyrophosphate formed during P-Ser-HPr dephosphorylation by HPrK/P. Might play a role in controlling the intracellular pyrophosphate pool. The protein is Pyrophosphatase PpaX of Bacillus cereus (strain AH820).